Consider the following 428-residue polypeptide: Glutamate-1-semialdehyde 2,1-aminomutase 1 (428 aa).

Lys267 carries the post-translational modification N6-(pyridoxal phosphate)lysine.

This sequence belongs to the class-III pyridoxal-phosphate-dependent aminotransferase family. HemL subfamily. As to quaternary structure, homodimer. Requires pyridoxal 5'-phosphate as cofactor.

The protein localises to the cytoplasm. It catalyses the reaction (S)-4-amino-5-oxopentanoate = 5-aminolevulinate. The protein operates within porphyrin-containing compound metabolism; protoporphyrin-IX biosynthesis; 5-aminolevulinate from L-glutamyl-tRNA(Glu): step 2/2. This Staphylococcus aureus (strain Mu3 / ATCC 700698) protein is Glutamate-1-semialdehyde 2,1-aminomutase 1.